Consider the following 385-residue polypeptide: Putative ribosomal RNA large subunit methyltransferase MJ1653 (385 aa).

A PUA domain is found at 2-81 (TTKLYVDFGG…LDENYIREKI (80 aa)).

This sequence belongs to the methyltransferase superfamily. RlmI family.

The protein resides in the cytoplasm. In Methanocaldococcus jannaschii (strain ATCC 43067 / DSM 2661 / JAL-1 / JCM 10045 / NBRC 100440) (Methanococcus jannaschii), this protein is Putative ribosomal RNA large subunit methyltransferase MJ1653.